A 246-amino-acid chain; its full sequence is 14-3-3 protein beta/alpha (246 aa).

The residue at position 1 (Met-1) is an N-acetylmethionine. Thr-2 is subject to N-acetylthreonine; in 14-3-3 protein beta/alpha, N-terminally processed. Position 2 is a phosphothreonine (Thr-2). Lys-5 carries the post-translational modification N6-acetyllysine. Lys-51 bears the N6-acetyllysine; alternate mark. Lys-51 participates in a covalent cross-link: Glycyl lysine isopeptide (Lys-Gly) (interchain with G-Cter in SUMO2); alternate. Ser-60 bears the Phosphoserine mark. Lys-70 is modified (N6-acetyllysine). Tyr-84 and Tyr-106 each carry 3'-nitrotyrosine. At Lys-117 the chain carries N6-acetyllysine. Phosphoserine is present on residues Ser-186 and Ser-232.

This sequence belongs to the 14-3-3 family. As to quaternary structure, homodimer. Interacts with SAMSN1 and PRKCE. Interacts with AKAP13. Interacts with SSH1 and TORC2/CRTC2. Interacts with ABL1; the interaction results in cytoplasmic location of ABL1 and inhibition of cABL-mediated apoptosis. Interacts with ROR2 (dimer); the interaction results in phosphorylation of YWHAB on tyrosine residues. Interacts with GAB2. Interacts with YAP1 (phosphorylated form). Interacts with the phosphorylated (by AKT1) form of SRPK2. Interacts with PKA-phosphorylated AANAT. Interacts with MYO1C. Interacts with SIRT2. Interacts with the 'Thr-369' phosphorylated form of DAPK2. Interacts with PI4KB, TBC1D22A and TBC1D22B. Interacts with the 'Ser-1134' and 'Ser-1161' phosphorylated form of SOS1. Interacts (via phosphorylated form) with YWHAB; this interaction occurs in a protein kinase AKT1-dependent manner. Interacts with SLITRK1. Interacts with SYNPO2 (phosphorylated form); YWHAB competes with ACTN2 for interaction with SYNPO2. Interacts with RIPOR2 (via phosphorylated form); this interaction occurs in a chemokine-dependent manner and does not compete for binding of RIPOR2 with RHOA nor blocks inhibition of RIPOR2-mediated RHOA activity. Interacts with MARK2 and MARK3. Interacts with TESK1; the interaction is dependent on the phosphorylation of TESK1 'Ser-439' and inhibits TESK1 kinase activity. Interacts with MEFV. Interacts with HDAC4. Interacts with ADAM22 (via C-terminus). The alpha, brain-specific form differs from the beta form in being phosphorylated. Phosphorylated on Ser-60 by protein kinase C delta type catalytic subunit in a sphingosine-dependent fashion.

It localises to the cytoplasm. Its subcellular location is the melanosome. Its function is as follows. Adapter protein implicated in the regulation of a large spectrum of both general and specialized signaling pathways. Binds to a large number of partners, usually by recognition of a phosphoserine or phosphothreonine motif. Binding generally results in the modulation of the activity of the binding partner. Negative regulator of osteogenesis. Blocks the nuclear translocation of the phosphorylated form (by AKT1) of SRPK2 and antagonizes its stimulatory effect on cyclin D1 expression resulting in blockage of neuronal apoptosis elicited by SRPK2. Negative regulator of signaling cascades that mediate activation of MAP kinases via AKAP13. This is 14-3-3 protein beta/alpha (YWHAB) from Bos taurus (Bovine).